The chain runs to 198 residues: GTP cyclohydrolase-2 (198 aa).

49 to 53 (RVHSE) provides a ligand contact to GTP. The Zn(2+) site is built by cysteine 54, cysteine 65, and cysteine 67. GTP contacts are provided by residues glutamine 70, 92 to 94 (EGR), and threonine 114. Aspartate 126 (proton acceptor) is an active-site residue. Residue arginine 128 is the Nucleophile of the active site. GTP-binding residues include threonine 149 and lysine 154.

This sequence belongs to the GTP cyclohydrolase II family. Homodimer. The cofactor is Zn(2+).

The enzyme catalyses GTP + 4 H2O = 2,5-diamino-6-hydroxy-4-(5-phosphoribosylamino)-pyrimidine + formate + 2 phosphate + 3 H(+). It participates in cofactor biosynthesis; riboflavin biosynthesis; 5-amino-6-(D-ribitylamino)uracil from GTP: step 1/4. Functionally, catalyzes the conversion of GTP to 2,5-diamino-6-ribosylamino-4(3H)-pyrimidinone 5'-phosphate (DARP), formate and pyrophosphate. In Escherichia fergusonii (strain ATCC 35469 / DSM 13698 / CCUG 18766 / IAM 14443 / JCM 21226 / LMG 7866 / NBRC 102419 / NCTC 12128 / CDC 0568-73), this protein is GTP cyclohydrolase-2.